The sequence spans 180 residues: Shikimate kinase (180 aa).

An ATP-binding site is contributed by Gly19–Thr24. Thr23 contributes to the Mg(2+) binding site. Substrate-binding residues include Asp41, Arg65, and Gly87. Arg125 is an ATP binding site. Arg144 contributes to the substrate binding site.

Belongs to the shikimate kinase family. As to quaternary structure, monomer. Requires Mg(2+) as cofactor.

The protein localises to the cytoplasm. It catalyses the reaction shikimate + ATP = 3-phosphoshikimate + ADP + H(+). It functions in the pathway metabolic intermediate biosynthesis; chorismate biosynthesis; chorismate from D-erythrose 4-phosphate and phosphoenolpyruvate: step 5/7. In terms of biological role, catalyzes the specific phosphorylation of the 3-hydroxyl group of shikimic acid using ATP as a cosubstrate. The protein is Shikimate kinase of Acinetobacter baylyi (strain ATCC 33305 / BD413 / ADP1).